Reading from the N-terminus, the 276-residue chain is Dermonecrotic toxin LlSicTox-alphaIV3 (276 aa).

The active site involves His5. Residues Glu25 and Asp27 each contribute to the Mg(2+) site. Residue His41 is the Nucleophile of the active site. 2 disulfide bridges follow: Cys45/Cys51 and Cys47/Cys192. Asp85 is a binding site for Mg(2+).

The protein belongs to the arthropod phospholipase D family. Class II subfamily. Requires Mg(2+) as cofactor. As to expression, expressed by the venom gland.

Its subcellular location is the secreted. The enzyme catalyses an N-(acyl)-sphingosylphosphocholine = an N-(acyl)-sphingosyl-1,3-cyclic phosphate + choline. It carries out the reaction an N-(acyl)-sphingosylphosphoethanolamine = an N-(acyl)-sphingosyl-1,3-cyclic phosphate + ethanolamine. It catalyses the reaction a 1-acyl-sn-glycero-3-phosphocholine = a 1-acyl-sn-glycero-2,3-cyclic phosphate + choline. The catalysed reaction is a 1-acyl-sn-glycero-3-phosphoethanolamine = a 1-acyl-sn-glycero-2,3-cyclic phosphate + ethanolamine. Dermonecrotic toxins cleave the phosphodiester linkage between the phosphate and headgroup of certain phospholipids (sphingolipid and lysolipid substrates), forming an alcohol (often choline) and a cyclic phosphate. This toxin acts on sphingomyelin (SM). It may also act on ceramide phosphoethanolamine (CPE), lysophosphatidylcholine (LPC) and lysophosphatidylethanolamine (LPE), but not on lysophosphatidylserine (LPS), and lysophosphatidylglycerol (LPG). It acts by transphosphatidylation, releasing exclusively cyclic phosphate products as second products. Induces dermonecrosis, hemolysis, increased vascular permeability, edema, inflammatory response, and platelet aggregation. In Loxosceles laeta (South American recluse spider), this protein is Dermonecrotic toxin LlSicTox-alphaIV3.